The following is a 195-amino-acid chain: UPF0314 protein RL4541 (195 aa).

A run of 4 helical transmembrane segments spans residues 15 to 35 (FWFVACFAVLVIQIAVEYMMG), 64 to 84 (WYTPSHIIHGFLFYGLAHLIL), 127 to 147 (GDSILNSAMDTVFMCVGFFFA), and 150 to 170 (APVALTVAIATFFEIFTGYII).

This sequence belongs to the UPF0314 family.

Its subcellular location is the cell membrane. The sequence is that of UPF0314 protein RL4541 from Rhizobium johnstonii (strain DSM 114642 / LMG 32736 / 3841) (Rhizobium leguminosarum bv. viciae).